The primary structure comprises 333 residues: Acyl-CoA wax alcohol acyltransferase 2 (333 aa).

3 helical membrane passes run 15–35 (VFAV…VIAV), 38–58 (YLVV…WLAF), and 130–150 (IFPG…MPFL).

Belongs to the diacylglycerol acyltransferase family. As to quaternary structure, monomer. As to expression, highly expressed in skin, where it is primarily restricted to undifferentiated peripheral sebocytes. Also expressed at lower level in other tissues except pancreas.

It is found in the endoplasmic reticulum membrane. The enzyme catalyses a long chain fatty alcohol + a fatty acyl-CoA = a wax ester + CoA. It carries out the reaction all-trans-retinol + an acyl-CoA = an all-trans-retinyl ester + CoA. It catalyses the reaction an acyl-CoA + a 1,2-diacyl-sn-glycerol = a triacyl-sn-glycerol + CoA. The catalysed reaction is 11-cis-retinol + a fatty acyl-CoA = 11-cis-retinyl ester + CoA. The enzyme catalyses 9-cis-retinol + a fatty acyl-CoA = 9-cis-retinyl ester + CoA. It carries out the reaction 13-cis-retinol + a fatty acyl-CoA = 13-cis-retinyl ester + CoA. It catalyses the reaction a 1-acylglycerol + an acyl-CoA = a 1,2-diacylglycerol + CoA. The catalysed reaction is 1-O-alkylglycerol + an acyl-CoA = 1-O-alkyl-3-acylglycerol + CoA. The enzyme catalyses a 2-acylglycerol + an acyl-CoA = a 1,2-diacyl-sn-glycerol + CoA. It carries out the reaction 2-(9Z-octadecenoyl)-glycerol + hexadecanoyl-CoA = 1-hexadecanoyl-2-(9Z-octadecenoyl)-sn-glycerol + CoA. It catalyses the reaction 1,2-di-(9Z-octadecenoyl)-sn-glycerol + hexadecanoyl-CoA = 1,2-di-(9Z)-octadecenoyl-3-hexadecanoyl-sn-glycerol + CoA. The catalysed reaction is hexadecan-1-ol + hexadecanoyl-CoA = hexadecanyl hexadecanoate + CoA. The enzyme catalyses hexadecane-1,2-diol + hexadecanoyl-CoA = 2-hydroxyhexadecyl hexadecanoate + CoA. It carries out the reaction 9-cis-retinol + hexadecanoyl-CoA = 9-cis-retinyl hexadecanoate + CoA. It catalyses the reaction all-trans-retinol + hexadecanoyl-CoA = all-trans-retinyl hexadecanoate + CoA. The catalysed reaction is 1,2-di-(9Z-octadecenoyl)-sn-glycerol + (9Z)-octadecenoyl-CoA = 1,2,3-tri-(9Z-octadecenoyl)-glycerol + CoA. The enzyme catalyses hexadecan-1-ol + (9Z)-octadecenoyl-CoA = hexadecanyl (9Z)-octadecenoate + CoA. It carries out the reaction (9Z)-hexadecen-1-ol + (9Z)-octadecenoyl-CoA = 1-O-(9Z)-hexadecenyl (9Z)-octadecenoate + CoA. It catalyses the reaction octadecan-1-ol + (9Z)-octadecenoyl-CoA = 1-O-octadecyl (9Z)-octadecenoate + CoA. The catalysed reaction is (9Z)-octadecen-1-ol + (9Z)-octadecenoyl-CoA = 1-O-(9Z)-octadecenyl (9Z)-octadecenoate + CoA. The enzyme catalyses hexadecan-1-ol + (9Z)-hexadecenoyl-CoA = 1-O-hexadecyl (9Z)-hexadecenoate + CoA. It carries out the reaction hexadecan-1-ol + octadecanoyl-CoA = hexadecanyl octadecanoate + CoA. It catalyses the reaction 11-cis-retinol + hexadecanoyl-CoA = 11-cis-retinyl hexadecanoate + CoA. The catalysed reaction is 1-O-(9Z-octadecenyl)-glycerol + (9Z)-octadecenoyl-CoA = 1-O-(9Z-octadecyl)-3-(9Z-octadecenoyl)-glycerol + CoA. The enzyme catalyses 1-(9Z-octadecenoyl)-glycerol + (9Z)-octadecenoyl-CoA = 1,2-di-(9Z-octadecenoyl)-glycerol + CoA. It carries out the reaction 11-cis-retinol + tetradecanoyl-CoA = 11-cis-retinyl tetradecanoate + CoA. It catalyses the reaction 9-cis-retinol + tetradecanoyl-CoA = 9-cis-retinyl tetradecanoate + CoA. The catalysed reaction is 13-cis-retinol + tetradecanoyl-CoA = 13-cis-retinyl tetradecanoate + CoA. The enzyme catalyses all-trans-retinol + tetradecanoyl-CoA = all-trans-retinyl tetradecanoate + CoA. It carries out the reaction tetradecan-1-ol + tetradecanoyl-CoA = tetradecanyl tetradecanoate + CoA. Its activity is regulated as follows. 11-cis retinoids act as allosteric modulators of acyl-CoA retinol O-fatty-acyltransferase (ARAT) activity by suppressing esterification of 9-cis, 13-cis, or all-trans retinols concurrently increasing the enzyme specificity toward 11-cis isomer. Its function is as follows. Acyltransferase that catalyzes the formation of ester bonds between fatty alcohols and fatty acyl-CoAs to form wax monoesters. Shows a preference for medium chain acyl-CoAs from C12 to C16 in length and fatty alcohols shorter than C20, as the acyl donors and acceptors, respectively. Also possesses acyl-CoA retinol acyltransferase (ARAT) activity that preferentially esterifies 11-cis-retinol, a chromophore precursor of bleached opsin pigments in cone cells. Shows higher catalytic efficiency toward 11-cis-retinol versus 9-cis-retinol, 13-cis-retinol, and all-trans-retinol substrates. This is Acyl-CoA wax alcohol acyltransferase 2 (AWAT2) from Homo sapiens (Human).